The sequence spans 199 residues: GTP-binding protein Di-Ras2 (199 aa).

GTP-binding positions include 14 to 21 (GAGGVGKS), 33 to 39 (RESYIPT), 61 to 65 (DTTGS), and 121 to 124 (NKCD). Ser-35 is subject to Phosphoserine. The Effector region signature appears at 36-44 (YIPTVEDTY). Residue Ser-126 is modified to Phosphoserine. Residue 152 to 153 (AK) coordinates GTP. Cys-196 carries the cysteine methyl ester modification. A lipid anchor (S-geranylgeranyl cysteine) is attached at Cys-196. A propeptide spans 197–199 (VVM) (removed in mature form).

This sequence belongs to the small GTPase superfamily. Di-Ras family. In terms of processing, ubiquitinated by the ECS(ASB11) complex via 'Lys-11'-linked ubiquitin chains, leading to its degradation by the proteasome.

It is found in the cell membrane. It carries out the reaction GTP + H2O = GDP + phosphate + H(+). In terms of biological role, displays low GTPase activity and exists predominantly in the GTP-bound form. This Mus musculus (Mouse) protein is GTP-binding protein Di-Ras2 (Diras2).